Here is a 192-residue protein sequence, read N- to C-terminus: PBAN-type neuropeptides (192 aa).

The N-terminal stretch at 1–23 is a signal peptide; it reads MYKTNIVFNVLALALFSIFFASC. Leu47 is modified (leucine amide). A propeptide spanning residues 51-94 is cleaved from the precursor; the sequence is SMKPSTEDNRQTFLRLLEAADALKFYYDQLPYERQADEPETKVT. A leucine amide mark is found at Leu103, Leu122, Leu158, and Leu168. The propeptide occupies 171–192; it reads ELSYDYPTKYRVARSVNKTMDN.

The protein belongs to the pyrokinin family. In terms of tissue distribution, expression is restricted to the subesophageal ganglion.

It localises to the secreted. Its function is as follows. A hormone that controls sex pheromone production in females and pheromone responsiveness in male. Also mediates visceral muscle contractile activity (myotropic activity). Identical to MRCH which is implicated in the formation of both melanin in the cuticle and ommochrome in the epidermis of armyworm species. Functionally, diapause hormone (DH) is responsible for induction of embryonic diapause. In terms of biological role, the three SGNPS are far less active than DH in inducing diapause eggs. Beta-SGNP expressed higher pban activity than PBAN-I, but alpha- and gamma-SGNP were far less active in pheromonotropic activity. This is PBAN-type neuropeptides from Bombyx mori (Silk moth).